An 832-amino-acid chain; its full sequence is Sodium/hydrogen exchanger 3 (832 aa).

The first 29 residues, 1–29, serve as a signal peptide directing secretion; the sequence is MSGRGGCGPCWGLLLALVLALGALPWTQG. Over 30-50 the chain is Extracellular; sequence AEQEHHDEIQGFQIVTFKWHH. A helical membrane pass occupies residues 51-73; the sequence is VQDPYIIALWVLVASLAKIVFHL. Residues 74-81 are Cytoplasmic-facing; sequence SHKVTSVV. A helical transmembrane segment spans residues 82-101; sequence PESALLIVLGLVLGGIVLAA. Residues 102–110 are Extracellular-facing; sequence DHIASFTLT. The helical transmembrane segment at 111–128 threads the bilayer; that stretch reads PTVFFFYLLPPIVLDAGY. At 129–131 the chain is on the cytoplasmic side; the sequence is FMP. Residues 132-167 form a helical membrane-spanning segment; it reads NRLFFSNLGSILLYAVVGTVWNAATTGLSLYGVFLS. Positions 140 and 141 each coordinate a 1,2-diacyl-sn-glycero-3-phospho-(1D-myo-inositol). Topologically, residues 168-180 are extracellular; it reads GIMGELKIGLLDF. Residues 181–202 form a helical membrane-spanning segment; sequence LLFGSLIAAVDPVAVLAVFEEV. Topologically, residues 203–204 are cytoplasmic; that stretch reads HV. Residues 205–236 form a helical membrane-spanning segment; sequence NEVLFIIVFGESLLNDAVTVVLYNVFQSFVTL. Over 237–243 the chain is Extracellular; that stretch reads GGDKVTG. Residues 244 to 278 traverse the membrane as a helical segment; it reads VDCVKGIVSFFVVSLGGTLVGVVFAFLLSLVTRFT. Residues 279 to 280 lie on the Cytoplasmic side of the membrane; the sequence is KH. A helical transmembrane segment spans residues 281–303; that stretch reads VRVIEPGFVFIISYLSYLTSEML. Residues 304–305 are Extracellular-facing; the sequence is SL. The helical transmembrane segment at 306–322 threads the bilayer; that stretch reads SSILAITFCGICCQKYV. The Cytoplasmic portion of the chain corresponds to 323-329; it reads KANISEQ. A helical transmembrane segment spans residues 330–358; sequence SATTVRYTMKMLASGAETIIFMFLGISAV. The Extracellular portion of the chain corresponds to 359–366; the sequence is DPLIWTWN. A helical transmembrane segment spans residues 367-388; that stretch reads TAFVLLTLLFVSVFRAIGVVLQ. Over 389–401 the chain is Cytoplasmic; it reads TWLLNRYRMVQLE. A 1,2-diacyl-sn-glycero-3-phospho-(1D-myo-inositol) is bound at residue methionine 397. Residues 402–425 traverse the membrane as a helical segment; it reads LIDQVVMSYGGLRGAVAFALVALL. Residues 426–432 are Extracellular-facing; it reads DGNKVKE. Residues 433-466 traverse the membrane as a helical segment; that stretch reads KNLFVSTTIIVVFFTVIFQGLTIKPLVQWLKVKR. The Cytoplasmic segment spans residues 467-832; it reads SEHREPKLNE…GAEHPESTHM (366 aa). A 1,2-diacyl-sn-glycero-3-phospho-(1D-myo-inositol) is bound by residues glutamine 496, isoleucine 497, and histidine 499. 2 positions are modified to phosphoserine: serine 554 and serine 562. The segment at 575 to 589 is interaction with EZR; sequence RPSTVEASVSYLLRE. The segment at 590–667 is interaction with NHERF4; sequence SASAVCLDMQ…RKRLESFKSA (78 aa). The interaction with AHCYL1 stretch occupies residues 591 to 696; it reads ASAVCLDMQS…AQKRRNSSVP (106 aa). Serine 592 and serine 607 each carry phosphoserine. Serine 663 bears the Phosphoserine; by SGK1 mark. A disordered region spans residues 664-706; it reads FKSAKLGLGQSKKATKHKRERERAQKRRNSSVPNGKLPLDSPA. The span at 676-692 shows a compositional bias: basic residues; sequence KATKHKRERERAQKRRN. A phosphoserine mark is found at serine 719, serine 813, and serine 816.

The protein belongs to the monovalent cation:proton antiporter 1 (CPA1) transporter (TC 2.A.36) family. In terms of assembly, homodimer. Found in the forms of complex and dynamic macromolecular complexes. Interacts with CHP1; this interaction increases trafficking and activity at the plasma membrane of SLC9A3. Interacts with CHP2 and SHANK2. Interacts with NHERF4 and interaction decreases in response to elevated calcium ion levels. Binds NHERF1 and NHERF2. Interacts with PDZK1 (via C-terminal PDZ domain). Interacts with AHCYL1; interaction is required for SLC9A3 activity. Interacts with EZR; interaction targets SLC9A3 to the apical membrane. Interacts with SNX27 (via PDZ domains); directs SLC9A3 membrane insertion from early endosomes to the plasma membrane. In terms of processing, phosphorylated by PKA, which inhibits activity. Phosphorylation at Ser-663 by SGK1 is associated with increased abundance at the cell membrane and activity. Phosphorylation at Ser-719 by CSNK2A1 regulates SLC9A3 activity through the formation of multiple signaling complexes. In terms of tissue distribution, intestinal and kidney specific. Most abundant in kidney cortex, followed equally by ileum and ascending colon, then kidney medulla and jejunum. Is absent from duodenum and descending colon.

It is found in the apical cell membrane. Its subcellular location is the cell membrane. The protein resides in the recycling endosome membrane. It localises to the early endosome membrane. It carries out the reaction Na(+)(in) + H(+)(out) = Na(+)(out) + H(+)(in). Seems to switch between active and inactive modes in response to various stimuli. Activated directly or indirectly by membrane phosphatidylinositol (PIs). Regulated by a variety of auxiliary proteins, which facilitate the maturation, cell surface expression and function of the transporter. Inhibited specifically by the drug tenapanor. Its function is as follows. Plasma membrane Na(+)/H(+) antiporter. Exchanges intracellular H(+) ions for extracellular Na(+) in 1:1 stoichiometry, playing a key role in salt and fluid absorption and pH homeostasis. Major apical Na(+)/H(+) exchanger in kidney and intestine playing an important role in renal and intestine Na(+) absorption and blood pressure regulation. The sequence is that of Sodium/hydrogen exchanger 3 (SLC9A3) from Oryctolagus cuniculus (Rabbit).